A 130-amino-acid chain; its full sequence is Fluoride-specific ion channel FluC (130 aa).

4 helical membrane-spanning segments follow: residues 3-23 (FVFLWAALGGAIGSSLRYFVG), 39-59 (GTFSVNIIGCFVIGFMGHLAV), 67-87 (FGIFFVTGVLGGFTTFSSYGL), and 102-122 (VSYALGTNILGLTGVAIGWFL). Gly-77 and Thr-80 together coordinate Na(+).

This sequence belongs to the fluoride channel Fluc/FEX (TC 1.A.43) family.

The protein resides in the cell inner membrane. The catalysed reaction is fluoride(in) = fluoride(out). Na(+) is not transported, but it plays an essential structural role and its presence is essential for fluoride channel function. Its function is as follows. Fluoride-specific ion channel. Important for reducing fluoride concentration in the cell, thus reducing its toxicity. This Helicobacter pylori (strain ATCC 700392 / 26695) (Campylobacter pylori) protein is Fluoride-specific ion channel FluC.